We begin with the raw amino-acid sequence, 353 residues long: S-adenosylmethionine:tRNA ribosyltransferase-isomerase (353 aa).

It belongs to the QueA family. As to quaternary structure, monomer.

Its subcellular location is the cytoplasm. It catalyses the reaction 7-aminomethyl-7-carbaguanosine(34) in tRNA + S-adenosyl-L-methionine = epoxyqueuosine(34) in tRNA + adenine + L-methionine + 2 H(+). Its pathway is tRNA modification; tRNA-queuosine biosynthesis. Its function is as follows. Transfers and isomerizes the ribose moiety from AdoMet to the 7-aminomethyl group of 7-deazaguanine (preQ1-tRNA) to give epoxyqueuosine (oQ-tRNA). The protein is S-adenosylmethionine:tRNA ribosyltransferase-isomerase of Dinoroseobacter shibae (strain DSM 16493 / NCIMB 14021 / DFL 12).